The chain runs to 418 residues: Tyrosine--tRNA ligase (418 aa).

Tyr-34 contacts L-tyrosine. Residues 39–48 (PTADSLHLGH) carry the 'HIGH' region motif. Tyr-169 and Gln-173 together coordinate L-tyrosine. The 'KMSKS' region motif lies at 229-233 (KFGKS). Lys-232 contributes to the ATP binding site. The 67-residue stretch at 352 to 418 (NNIVELLVSS…GKKKYFVLTY (67 aa)) folds into the S4 RNA-binding domain.

It belongs to the class-I aminoacyl-tRNA synthetase family. TyrS type 1 subfamily. In terms of assembly, homodimer.

The protein resides in the cytoplasm. It catalyses the reaction tRNA(Tyr) + L-tyrosine + ATP = L-tyrosyl-tRNA(Tyr) + AMP + diphosphate + H(+). Catalyzes the attachment of tyrosine to tRNA(Tyr) in a two-step reaction: tyrosine is first activated by ATP to form Tyr-AMP and then transferred to the acceptor end of tRNA(Tyr). This chain is Tyrosine--tRNA ligase, found in Streptococcus pneumoniae (strain ATCC BAA-255 / R6).